A 501-amino-acid polypeptide reads, in one-letter code: Group 3 secretory phospholipase A2 (501 aa).

The signal sequence occupies residues 1 to 19 (MGVLVVLLGVLSFLGRTLG). A disordered region spans residues 119–139 (RGPAESPAGTREKRAAGQNGV). A phospholipase A2-like region spans residues 150–291 (GWTVPGTLWC…SWSSPATSLT (142 aa)). W158, G160, and G162 together coordinate Ca(2+). 4 disulfides stabilise this stretch: C159–C181, C180–C220, C187–C213, and C211–C244. N-linked (GlcNAc...) asparagine glycosylation is present at N167. Residue H184 is part of the active site. D185 lines the Ca(2+) pocket. D214 is an active-site residue. A glycan (N-linked (GlcNAc...) asparagine) is linked at N280. Polar residues predominate over residues 284-298 (SSPATSLTPSPQNPA). Residues 284–339 (SSPATSLTPSPQNPALSRPQPMQHPQQWPSEWKESKSPSKTNATALQAPVASPGSD) form a disordered region. N-linked (GlcNAc...) asparagine glycosylation is found at N325 and N403.

Belongs to the phospholipase A2 family. It depends on Ca(2+) as a cofactor. N-glycosylation does not affect the catalytic activity, but is required for proper secretion. A nonglycosylated form was observed in several cell types. Post-translationally, in several cell types, the N- and C-termini are cleaved off.

Its subcellular location is the secreted. The protein resides in the cell membrane. It is found in the cytoplasm. It localises to the cytoskeleton. The protein localises to the microtubule organizing center. Its subcellular location is the centrosome. The protein resides in the centriole. It is found in the recycling endosome. It catalyses the reaction a 1,2-diacyl-sn-glycero-3-phosphocholine + H2O = a 1-acyl-sn-glycero-3-phosphocholine + a fatty acid + H(+). The catalysed reaction is 1-hexadecanoyl-2-(9Z,12Z-octadecadienoyl)-sn-glycero-3-phosphocholine + H2O = (9Z,12Z)-octadecadienoate + 1-hexadecanoyl-sn-glycero-3-phosphocholine + H(+). It carries out the reaction 1-hexadecanoyl-2-(5Z,8Z,11Z,14Z-eicosatetraenoyl)-sn-glycero-3-phosphocholine + H2O = 1-hexadecanoyl-sn-glycero-3-phosphocholine + (5Z,8Z,11Z,14Z)-eicosatetraenoate + H(+). The enzyme catalyses 1-hexadecanoyl-2-(9Z,12Z-octadecadienoyl)-sn-glycero-3-phosphoethanolamine + H2O = 1-hexadecanoyl-sn-glycero-3-phosphoethanolamine + (9Z,12Z)-octadecadienoate + H(+). It catalyses the reaction 1-hexadecanoyl-2-(5Z,8Z,11Z,14Z-eicosatetraenoyl)-sn-glycero-3-phosphoethanolamine + H2O = 1-hexadecanoyl-sn-glycero-3-phosphoethanolamine + (5Z,8Z,11Z,14Z)-eicosatetraenoate + H(+). In terms of biological role, secretory calcium-dependent phospholipase A2 that primarily targets extracellular phospholipids. Hydrolyzes the ester bond of the fatty acyl group attached at sn-2 position of phospholipids without apparent head group selectivity. Contributes to phospholipid remodeling of low-density lipoprotein (LDL) and high-density lipoprotein (HDL) particles. Hydrolyzes LDL phospholipids releasing unsaturated fatty acids that regulate macrophage differentiation toward foam cells. May act in an autocrine and paracrine manner. Secreted by immature mast cells, acts on nearby fibroblasts upstream to PTDGS to synthesize prostaglandin D2 (PGD2), which in turn promotes mast cell maturation and degranulation via PTGDR. Secreted by epididymal epithelium, acts on immature sperm cells within the duct, modulating the degree of unsaturation of the fatty acyl components of phosphatidylcholines required for acrosome assembly and sperm cell motility. Facilitates the replacement of fatty acyl chains in phosphatidylcholines in sperm membranes from omega-6 and omega-9 to omega-3 polyunsaturated fatty acids (PUFAs). Coupled to lipoxygenase pathway, may process omega-6 PUFAs to generate oxygenated lipid mediators in the male reproductive tract. At pericentrosomal preciliary compartment, negatively regulates ciliogenesis likely by regulating endocytotic recycling of ciliary membrane protein. Coupled to cyclooxygenase pathway provides arachidonate to generate prostaglandin E2 (PGE2), a potent immunomodulatory lipid in inflammation and tumorigenesis. At colonic epithelial barrier, preferentially hydrolyzes phospholipids having arachidonate and docosahexaenoate at sn-2 position, contributing to the generation of oxygenated metabolites involved in colonic stem cell homeostasis. Releases C16:0 and C18:0 lysophosphatidylcholine subclasses from neuron plasma membranes and promotes neurite outgrowth and neuron survival. This Bos taurus (Bovine) protein is Group 3 secretory phospholipase A2 (PLA2G3).